Reading from the N-terminus, the 192-residue chain is MKIGYARVSTGLQNLNLQEDRLNQYGCEKIFSDHISGAKSKRPGLDRAIEFARSGDTIVVWRLDRLGRNMADLITLVNELNNRGVSFHSLEENITMDKSSSTGQLLFHLFAAFAEFERNLILERSSAGRIAARARGRYGGRPEKLNKQDLTLLKTLYDNGTPIKTIAEQWKVSRTTIYRYLNKLNNQENKDK.

In terms of domain architecture, Resolvase/invertase-type recombinase catalytic spans 1-136 (MKIGYARVST…AGRIAARARG (136 aa)). The active-site O-(5'-phospho-DNA)-serine intermediate is the S9. Positions 163-182 (IKTIAEQWKVSRTTIYRYLN) form a DNA-binding region, H-T-H motif.

Belongs to the site-specific recombinase resolvase family.

DNA-invertase, mediating the inversion of inv. In Staphylococcus aureus, this protein is Transposon Tn552 DNA-invertase BinR (resR).